The primary structure comprises 883 residues: Phosphoenolpyruvate carboxylase (883 aa).

Catalysis depends on residues H138 and K546.

The protein belongs to the PEPCase type 1 family. Requires Mg(2+) as cofactor.

The catalysed reaction is oxaloacetate + phosphate = phosphoenolpyruvate + hydrogencarbonate. Functionally, forms oxaloacetate, a four-carbon dicarboxylic acid source for the tricarboxylic acid cycle. The sequence is that of Phosphoenolpyruvate carboxylase from Erwinia tasmaniensis (strain DSM 17950 / CFBP 7177 / CIP 109463 / NCPPB 4357 / Et1/99).